The following is a 337-amino-acid chain: MRVLGIETSCDETGVAVYDDEQGLLSHTLYSQVKLHADYGGVVPELASRDHVRKIVPLVKQALADANCTLDDIDGVAYTKGPGLVGALLVGACMGRALAYSWDKPAIGVHHMEGHLLAPMLEDDVPAFPFLALLVSGGHSMLVAVEGIGKYEVLGESVDDAAGEAFDKTAKLMGLDYPGGPRLAKLAAKGESGHYRFPRPMTDKPGLNFSFSGLKTFAANTIAAESDDEQTRANIALAFEEAVVDTLSIKCRRALKQTGYKNLVIAGGVSANTRLRSSLAEMMTSLGGKVYYPRGEFCTDNGAMIAYAGLQRLKAGQTDDLGVKGIPRWPLDTLPPV.

The Fe cation site is built by H111 and H115. Substrate contacts are provided by residues 134 to 138 (LVSGG), D167, G180, and N272. Fe cation is bound at residue D300.

It belongs to the KAE1 / TsaD family. Fe(2+) is required as a cofactor.

The protein resides in the cytoplasm. It catalyses the reaction L-threonylcarbamoyladenylate + adenosine(37) in tRNA = N(6)-L-threonylcarbamoyladenosine(37) in tRNA + AMP + H(+). In terms of biological role, required for the formation of a threonylcarbamoyl group on adenosine at position 37 (t(6)A37) in tRNAs that read codons beginning with adenine. Is involved in the transfer of the threonylcarbamoyl moiety of threonylcarbamoyl-AMP (TC-AMP) to the N6 group of A37, together with TsaE and TsaB. TsaD likely plays a direct catalytic role in this reaction. In Shewanella woodyi (strain ATCC 51908 / MS32), this protein is tRNA N6-adenosine threonylcarbamoyltransferase.